The primary structure comprises 309 residues: NADH-cytochrome b5 reductase 1 (309 aa).

A helical transmembrane segment spans residues 31–51; the sequence is DWVVYSVALALALGTWKFFQL. The FAD-binding FR-type domain maps to 60-168; sequence TKFQEFELKE…RGPKGAFVYQ (109 aa). FAD is bound by residues 148–163 and 174–208; these read AGLSVGQSIRVRGPKG and HFGMIAGGTGITPMLQVVRAIVRGRAAGDTTQVDL.

This sequence belongs to the flavoprotein pyridine nucleotide cytochrome reductase family. Monomer. Component of the 2-(3-amino-3-carboxypropyl)histidine synthase complex composed of DPH1, DPH2, DPH3 and a NADH-dependent reductase, predominantly CBR1. Requires FAD as cofactor.

The protein resides in the mitochondrion outer membrane. It catalyses the reaction 2 Fe(III)-[cytochrome b5] + NADH = 2 Fe(II)-[cytochrome b5] + NAD(+) + H(+). The enzyme catalyses 2 Fe(3+)-[Dph3] + NADH = 2 Fe(2+)-[Dph3] + NAD(+) + H(+). It participates in protein modification; peptidyl-diphthamide biosynthesis. Functionally, NADH-dependent reductase for DPH3 and cytochrome b5. Required for the first step of diphthamide biosynthesis, a post-translational modification of histidine which occurs in elongation factor 2. DPH1 and DPH2 transfer a 3-amino-3-carboxypropyl (ACP) group from S-adenosyl-L-methionine (SAM) to a histidine residue, the reaction is assisted by a reduction system comprising DPH3 and a NADH-dependent reductase, predominantly CBR1. By reducing DPH3, also involved in the formation of the tRNA wobble base modification mcm5s 2U (5-methoxycarbonylmethyl-2-thiouridine), mediated by the elongator complex. The cytochrome b5/NADH cytochrome b5 reductase electron transfer system supports the catalytic activity of several sterol biosynthetic enzymes. This Pyricularia oryzae (strain 70-15 / ATCC MYA-4617 / FGSC 8958) (Rice blast fungus) protein is NADH-cytochrome b5 reductase 1 (CBR1).